We begin with the raw amino-acid sequence, 758 residues long: Glucocorticoid receptor (758 aa).

2 disordered regions span residues 1-61 and 349-382; these read MDPG…SANG and GMSSSSFPVGFSSPKARPEASGSASSAPAKPSGP. The interval 1 to 386 is modulating; sequence MDPGGLKHSK…AKPSGPTHKI (386 aa). Positions 26 to 42 are enriched in low complexity; that stretch reads GSFSGDTGGSKSTTSTS. 2 consecutive NR C4-type zinc fingers follow at residues 387-407 and 432-456; these read CLVCSDEASGCHYGVLTCGSC and CAGRNDCIIDKIRRKNCPACRFRKC. Residues 387–461 constitute a DNA-binding region (nuclear receptor); that stretch reads CLVCSDEASG…RFRKCLQAGM (75 aa). Residues 462-498 form a hinge region; the sequence is NLEARKNKKLIRLKGQQTTMEPNPPPPDERACALIPK. The NR LBD domain maps to 499–733; that stretch reads SMPQLVPTML…FPEMLAEIIS (235 aa).

This sequence belongs to the nuclear hormone receptor family. NR3 subfamily. Heteromultimeric cytoplasmic complex with HSP90AA1, HSPA1A/HSPA1B, and FKBP5 or another immunophilin such as PPID, STIP1, or the immunophilin homolog PPP5C. Upon ligand binding FKBP5 dissociates from the complex and FKBP4 takes its place, thereby linking the complex to dynein and mediating transport to the nucleus, where the complex dissociates. Directly interacts with UNC45A. Binds to DNA as a homodimer, and as heterodimer with NR3C2 or the retinoid X receptor. Binds STAT5A and STAT5B homodimers and heterodimers. Interacts with NRIP1, POU2F1, POU2F2 and TRIM28. Interacts with several coactivator complexes, including the SMARCA4 complex, CREBBP/EP300, TADA2L (Ada complex) and p160 coactivators such as NCOA2 and NCOA6. Interaction with BAG1 inhibits transactivation. Interacts with HEXIM1, PELP1 and TGFB1I1. Interacts with NCOA1, NCOA3, SMARCA4, SMARCC1, SMARCD1, and SMARCE1. Post-translationally, phosphorylated in the absence of hormone; becomes hyperphosphorylated in the presence of glucocorticoids. May be dephosphorylated by PPP5C, attenuates NR3C1 action. As to expression, isoform 1 is expressed in all tissues tested including liver, gills, intestine, skeletal muscle, kidney, heart, spleen, stomach, brain, pituitary, ovary, testis, skin and bladder. Isoform 2 is found only in testis.

The protein localises to the cytoplasm. It is found in the nucleus. It localises to the mitochondrion. The protein resides in the cytoskeleton. Its subcellular location is the spindle. The protein localises to the microtubule organizing center. It is found in the centrosome. Receptor for glucocorticoids (GC). Has a dual mode of action: as a transcription factor that binds to glucocorticoid response elements (GRE), both for nuclear and mitochondrial DNA, and as a modulator of other transcription factors. Affects inflammatory responses, cellular proliferation and differentiation in target tissues. Involved in chromatin remodeling. Plays a role in rapid mRNA degradation by binding to the 5' UTR of target mRNAs and interacting with PNRC2 in a ligand-dependent manner which recruits the RNA helicase UPF1 and the mRNA-decapping enzyme DCP1A, leading to RNA decay. Could act as a coactivator for STAT5-dependent transcription upon growth hormone (GH) stimulation and could reveal an essential role of hepatic GR in the control of body growth. Mediates glucocorticoid-induced apoptosis. Promotes accurate chromosome segregation during mitosis. May act as a tumor suppressor. May play a negative role in adipogenesis through the regulation of lipolytic and antilipogenic gene expression. This is Glucocorticoid receptor (nr3c1) from Oncorhynchus mykiss (Rainbow trout).